The sequence spans 245 residues: Methyltransferase-like protein 27 (245 aa).

The sequence is that of Methyltransferase-like protein 27 from Homo sapiens (Human).